The primary structure comprises 96 residues: Phosphoribosyl-ATP pyrophosphatase (96 aa).

Belongs to the PRA-PH family.

It is found in the cytoplasm. The catalysed reaction is 1-(5-phospho-beta-D-ribosyl)-ATP + H2O = 1-(5-phospho-beta-D-ribosyl)-5'-AMP + diphosphate + H(+). It participates in amino-acid biosynthesis; L-histidine biosynthesis; L-histidine from 5-phospho-alpha-D-ribose 1-diphosphate: step 2/9. The chain is Phosphoribosyl-ATP pyrophosphatase from Methanococcus vannielii (strain ATCC 35089 / DSM 1224 / JCM 13029 / OCM 148 / SB).